Reading from the N-terminus, the 320-residue chain is Protein PXR1 (320 aa).

Residues 1-11 (MGLAGPRKRTK) show a composition bias toward basic residues. The segment at 1–24 (MGLAGPRKRTKISHDPNNTAWSRS) is disordered. Residues 15–24 (DPNNTAWSRS) show a composition bias toward polar residues. The 55-residue stretch at 25–79 (TSGYGHKIMSAQGWTPGSFLGASNAAHADHFTAGSAGHIRVILKDDNLGLGAKLR) folds into the G-patch domain. The segment at 152–298 (GEEVQTPQIS…MGRQFTRGRH (147 aa)) is disordered. The segment covering 169–182 (KRPKKARKKEKRRA) has biased composition (basic residues). 3 stretches are compositionally biased toward basic and acidic residues: residues 203-214 (RKENKEKKKSSD), 243-256 (KDPE…HDDS), and 269-288 (QESR…EHRP).

Belongs to the PINX1 family.

The protein resides in the nucleus. The protein localises to the nucleolus. Functionally, involved in rRNA-processing at A0, A1 and A2 sites and negatively regulates telomerase. The sequence is that of Protein PXR1 (PXR1) from Ajellomyces capsulatus (strain NAm1 / WU24) (Darling's disease fungus).